A 289-amino-acid chain; its full sequence is ATP synthase subunit a (289 aa).

Helical transmembrane passes span 43-63 (AFHV…VLIF), 101-121 (SAVI…MNAV), 160-180 (LSVF…GGFI), 193-213 (LFVQ…TLIA), 232-252 (VFIL…GLGV), and 259-279 (AVFH…LTIV).

It belongs to the ATPase A chain family. In terms of assembly, F-type ATPases have 2 components, CF(1) - the catalytic core - and CF(0) - the membrane proton channel. CF(1) has five subunits: alpha(3), beta(3), gamma(1), delta(1), epsilon(1). CF(0) has three main subunits: a(1), b(2) and c(9-12). The alpha and beta chains form an alternating ring which encloses part of the gamma chain. CF(1) is attached to CF(0) by a central stalk formed by the gamma and epsilon chains, while a peripheral stalk is formed by the delta and b chains.

It is found in the cell inner membrane. Key component of the proton channel; it plays a direct role in the translocation of protons across the membrane. This chain is ATP synthase subunit a, found in Pseudomonas syringae pv. syringae (strain B728a).